The sequence spans 362 residues: NAD(P)H-quinone oxidoreductase subunit 1, chloroplastic (362 aa).

8 consecutive transmembrane segments (helical) span residues 29–49 (ILPILTLLLGITIEVLVIVWL), 103–123 (IAVISVLLSFLVIPLGYHFVL), 128–148 (IGVFLWIAISSIAPIGLLMAG), 164–184 (AAQSISYEIPLTFCVLAISLL), 202–222 (FFGWNIWRQPIGFLVFLISSL), 247–267 (YSGIKYGLFYLVSYLNLLVSS), 303–323 (TMGIFITLTKAYLFLFISITI), and 342–362 (FLLPISLGNLLLTTSFQLVSL).

The protein belongs to the complex I subunit 1 family. In terms of assembly, NDH is composed of at least 16 different subunits, 5 of which are encoded in the nucleus.

It is found in the plastid. It localises to the chloroplast thylakoid membrane. The catalysed reaction is a plastoquinone + NADH + (n+1) H(+)(in) = a plastoquinol + NAD(+) + n H(+)(out). It carries out the reaction a plastoquinone + NADPH + (n+1) H(+)(in) = a plastoquinol + NADP(+) + n H(+)(out). In terms of biological role, NDH shuttles electrons from NAD(P)H:plastoquinone, via FMN and iron-sulfur (Fe-S) centers, to quinones in the photosynthetic chain and possibly in a chloroplast respiratory chain. The immediate electron acceptor for the enzyme in this species is believed to be plastoquinone. Couples the redox reaction to proton translocation, and thus conserves the redox energy in a proton gradient. The protein is NAD(P)H-quinone oxidoreductase subunit 1, chloroplastic of Hordeum vulgare (Barley).